Consider the following 38-residue polypeptide: MKVRPSVKPICEYCKVIRRNGRVMVICPANPKHKQRQG.

Belongs to the bacterial ribosomal protein bL36 family.

In Streptococcus pneumoniae serotype 4 (strain ATCC BAA-334 / TIGR4), this protein is Large ribosomal subunit protein bL36 (rpmJ).